The following is an 88-amino-acid chain: FXYD domain-containing ion transport regulator 4 (88 aa).

Positions 1–20 (MEEITCAFLLLLAGLPALEA) are cleaved as a signal peptide. The Extracellular portion of the chain corresponds to 21-38 (SDPVDKDSPFYYDWESLQ). The chain crosses the membrane as a helical span at residues 39–59 (LGGLIFGGLLCIAGIAMALSG). The Cytoplasmic portion of the chain corresponds to 60–88 (KCKCRRTHKPSSLPGKATPLIIPGSANTC).

It belongs to the FXYD family. As to quaternary structure, regulatory subunit of the sodium/potassium-transporting ATPase which is composed of a catalytic alpha subunit, a non-catalytic beta subunit and a regulatory subunit. The regulatory subunit, a member of the FXYD protein family, modulates the enzymatic activity in a tissue- and isoform-specific way by changing affinities of the Na+/K+-ATPase toward Na(+), K(+) or ATP.

The protein localises to the cell membrane. It localises to the basolateral cell membrane. In terms of biological role, associates with and regulates the activity of the sodium/potassium-transporting ATPase (NKA) which catalyzes the hydrolysis of ATP coupled with the exchange of Na(+) and K(+) ions across the plasma membrane. Increases the apparent affinity of the transporter for Na(+) and increases NKA activity. This Mus musculus (Mouse) protein is FXYD domain-containing ion transport regulator 4 (Fxyd4).